The following is a 171-amino-acid chain: Putative rhomboid protein L523 (171 aa).

4 helical membrane-spanning segments follow: residues tyrosine 3–phenylalanine 23, phenylalanine 67–threonine 87, valine 94–leucine 114, and glycine 119–serine 139. The Nucleophile role is filled by serine 100. Histidine 143 is a catalytic residue. The chain crosses the membrane as a helical span at residues isoleucine 144–valine 164.

This sequence belongs to the peptidase S54 family.

It localises to the membrane. Functionally, probable serine protease. The protein is Putative rhomboid protein L523 of Acanthamoeba polyphaga mimivirus (APMV).